Reading from the N-terminus, the 522-residue chain is Peptide methionine sulfoxide reductase MsrA/MsrB (522 aa).

The Thioredoxin domain maps to 17 to 174 (LALGACSPKI…ALALIRDPNA (158 aa)). C68 and C71 are disulfide-bonded. Positions 199 to 354 (RTIYLAGGCF…PNGYCHIDIR (156 aa)) are peptide methionine sulfoxide reductase A. The active site involves C207. One can recognise a MsrB domain in the interval 383–506 (DAELKRTLTE…NGASLKFIPL (124 aa)). C440 and C495 are oxidised to a cystine. The active-site Nucleophile is C495.

In the N-terminal section; belongs to the thioredoxin family. It in the central section; belongs to the MsrA Met sulfoxide reductase family. The protein in the C-terminal section; belongs to the MsrB Met sulfoxide reductase family.

The catalysed reaction is L-methionyl-[protein] + [thioredoxin]-disulfide + H2O = L-methionyl-(S)-S-oxide-[protein] + [thioredoxin]-dithiol. It carries out the reaction [thioredoxin]-disulfide + L-methionine + H2O = L-methionine (S)-S-oxide + [thioredoxin]-dithiol. The enzyme catalyses L-methionyl-[protein] + [thioredoxin]-disulfide + H2O = L-methionyl-(R)-S-oxide-[protein] + [thioredoxin]-dithiol. Its function is as follows. Has an important function as a repair enzyme for proteins that have been inactivated by oxidation. Catalyzes the reversible oxidation-reduction of methionine sulfoxide in proteins to methionine. This chain is Peptide methionine sulfoxide reductase MsrA/MsrB (msrAB), found in Neisseria meningitidis serogroup B (strain ATCC BAA-335 / MC58).